Reading from the N-terminus, the 35-residue chain is Sperm protamine alpha isoform 2 (35 aa).

A disordered region spans residues 1-35 (MPRRRRRASRPIRRRRRARRSTAVRRRRRVVRRRR). Residues Ser9 and Ser21 each carry the phosphoserine modification.

Post-translationally, phosphorylated in immature sperm. Dephosphorylated in mature sperm allowing a stronger interaction with DNA. As to expression, gonads.

It localises to the nucleus. The protein resides in the chromosome. Its function is as follows. Protamines substitute for histones in the chromatin of sperm during the haploid phase of spermatogenesis. They compact sperm DNA into a highly condensed, stable and inactive complex. In Scomber scombrus (Atlantic mackerel), this protein is Sperm protamine alpha isoform 2.